The primary structure comprises 1606 residues: E3 ubiquitin-protein ligase HECW1 (1606 aa).

The C2 domain maps to 182–318; the sequence is SAAPIFKSIG…LERHAIGDRV (137 aa). 4 disordered regions span residues 349–418, 459–538, 566–672, and 730–815; these read DDEE…PAEE, AEQL…CSLP, LLHS…SCEG, and STVF…SQLP. A compositionally biased stretch (polar residues) spans 354-373; the sequence is SLSTEPESAQIQDSPMNNLM. A compositionally biased stretch (basic and acidic residues) spans 380–392; it reads PRSEAPESSESWK. Composition is skewed to acidic residues over residues 500–511 and 579–588; these read EEEEKEQEEEGD and AEEEDGAEEE. Residues 589–600 show a composition bias toward basic and acidic residues; the sequence is STLKDSSEKDGL. The span at 612–621 shows a compositional bias: acidic residues; sequence ALEEDREEPE. 3 stretches are compositionally biased toward polar residues: residues 651 to 663, 751 to 765, and 806 to 815; these read HPST…SSPR, DSMQ…STNG, and HNSQPVSQLP. The region spanning 829 to 862 is the WW 1 domain; the sequence is EPLPPNWEARIDSHGRVFYVDHVNRTTTWQRPTA. A coiled-coil region spans residues 870-901; that stretch reads RRSGSIQQMEQLNRRYQNIQRTIATERSEEDS. Residues S874, S937, and S939 each carry the phosphoserine modification. The interval 894–938 is disordered; the sequence is TERSEEDSGSQSCEQAPAGGGGGGGSDSEAESSQSSLDLRREGSL. Positions 1018–1051 constitute a WW 2 domain; the sequence is LELPRGWEIKTDQQGKSFFVDHNSRATTFIDPRI. Residues 1271 to 1606 enclose the HECT domain; sequence SRKELQRNKL…VEETSTFGLE (336 aa). C1574 serves as the catalytic Glycyl thioester intermediate.

In terms of assembly, interacts with DVL1 and SSR3. Also interacts with mutant SOD1. In terms of tissue distribution, predominantly expressed in neurons of adult and fetal brain. Weakly expressed in the kidney.

The protein resides in the cytoplasm. The enzyme catalyses S-ubiquitinyl-[E2 ubiquitin-conjugating enzyme]-L-cysteine + [acceptor protein]-L-lysine = [E2 ubiquitin-conjugating enzyme]-L-cysteine + N(6)-ubiquitinyl-[acceptor protein]-L-lysine.. The protein operates within protein modification; protein ubiquitination. Its function is as follows. E3 ubiquitin-protein ligase that mediates ubiquitination and subsequent degradation of DVL1. Also targets the mutant SOD1 protein involved in familial amyotrophic lateral sclerosis (FALS). Forms cytotoxic aggregates with DVL1, SSR3 and mutant SOD1 that lead to motor neuron death in FALS. The chain is E3 ubiquitin-protein ligase HECW1 (HECW1) from Homo sapiens (Human).